We begin with the raw amino-acid sequence, 162 residues long: Sorting nexin-3 (162 aa).

An N-acetylalanine modification is found at Ala2. Residues 27–151 (NFLEIDVSNP…HMFLQDEIID (125 aa)) enclose the PX domain. Arg43 carries the post-translational modification Omega-N-methylarginine. Arg70, Ser72, Lys95, and Arg118 together coordinate a 1,2-diacyl-sn-glycero-3-phospho-(1D-myo-inositol-3-phosphate). Ser72 is modified (phosphoserine). Lys95 participates in a covalent cross-link: Glycyl lysine isopeptide (Lys-Gly) (interchain with G-Cter in SUMO2). A binds predominantly to PtdIns(P5) and weaker to PtdIns(P3) abd PtdIns(P4); involved in neurite outgrowth regulation region spans residues 147-162 (DEIIDKSYTPSKIRHA).

Belongs to the sorting nexin family. Interacts with VPS26A, VPS29. Interacts with VPS35; the interaction with VPS35 is direct. The association with the retromer CSC subcomplex subunits is proposed to represent a functional distinct retromer variant described as SNX3-retromer complex. Interacts with USP10 and SCNN1A. Interacts with TRFC. Interacts with SNX8; 2 molecules of SNX8 seems to associate with one molecule of SNX3. Interacts with PTPRU. Interacts with MON2 and DOP1B. In terms of processing, ubiquitinated, leading to its proteasomal degradation. Deubiquitinated by USP10. As to expression, highly expressed in developing red cells and hematopoietic tissues.

The protein resides in the early endosome. It localises to the cytoplasmic vesicle. The protein localises to the phagosome. Phosphoinositide-binding protein required for multivesicular body formation. Specifically binds phosphatidylinositol 3-phosphate (PtdIns(P3)). Can also bind phosphatidylinositol 4-phosphate (PtdIns(P4)), phosphatidylinositol 5-phosphate (PtdIns(P5)) and phosphatidylinositol 3,5-biphosphate (PtdIns(3,5)P2). Plays a role in protein transport between cellular compartments. Together with RAB7A facilitates endosome membrane association of the retromer cargo-selective subcomplex (CSC). May act in part as component of the SNX3-retromer complex which mediates the retrograde endosome-to-TGN transport of WLS distinct from the SNX-BAR retromer pathway. Promotes stability and cell surface expression of epithelial sodium channel (ENAC) subunits SCNN1A and SCNN1G. Not involved in EGFR degradation. Involved in the regulation of phagocytosis in dendritic cells possibly by regulating EEA1 recruitment to the nascent phagosomes. Involved in iron homeostasis through regulation of endocytic recycling of the transferrin receptor Tfrc presuambly by delivering the transferrin:transferrin receptor complex to recycling endosomes; the function may involve the CSC retromer subcomplex. Involved in regulation of neurite outgrowth in primary neurons. This is Sorting nexin-3 (Snx3) from Mus musculus (Mouse).